Consider the following 343-residue polypeptide: Twinfilin (343 aa).

ADF-H domains lie at 4-139 and 177-312; these read QTGI…KHKI and GINC…EELH. The segment at 317 to 343 is disordered; the sequence is NLRPQFSKPKGPPSRGAKRLTKPQAVE.

The protein belongs to the actin-binding proteins ADF family. Twinfilin subfamily. Interacts with G-actin; ADP-actin form.

The protein localises to the cytoplasm. It is found in the cytoskeleton. Its subcellular location is the cell cortex. Functionally, actin-binding protein involved in motile and morphological processes. Inhibits actin polymerization, likely by sequestering G-actin. This chain is Twinfilin (twf), found in Aedes aegypti (Yellowfever mosquito).